A 150-amino-acid chain; its full sequence is Ribonuclease K6 (150 aa).

The signal sequence occupies residues 1–23 (MVLCFPLLLLLLVLWGPVCPLHA). His38 serves as the catalytic Proton acceptor. Intrachain disulfides connect Cys46–Cys104, Cys60–Cys114, Cys78–Cys129, and Cys85–Cys92. Asn55 carries an N-linked (GlcNAc...) asparagine glycan. Substrate-binding positions include 61–65 (KHQNT) and Lys86. Residue Asn100 is glycosylated (N-linked (GlcNAc...) asparagine). Residue Arg105 coordinates substrate. Residue His145 is the Proton donor of the active site.

This sequence belongs to the pancreatic ribonuclease family. As to quaternary structure, interacts (via N-terminus) with bacterial lipopolysaccharide (LPS). In terms of tissue distribution, highly expressed in spleen (at protein level). Has little or no expression in healthy kidneys (at protein level). Detected in interstitial leukocytes in infected kidneys (at protein level). Expressed in ureter where it localizes to urothelial and submucosal leukocytes (at protein level). Strong expression in lung and thymus, and lower expression in heart, placenta, pancreas, liver, brain and skeletal muscle. Also expressed in monocytes and neutrophils.

The protein resides in the secreted. Its subcellular location is the lysosome. The protein localises to the cytoplasmic granule. Functionally, ribonuclease which shows a preference for the pyrimidines uridine and cytosine. Has potent antibacterial activity against a range of Gram-positive and Gram-negative bacteria, including P.aeruginosa, A.baumanii, M.luteus, S.aureus, E.faecalis, E.faecium, S.saprophyticus and E.coli. Causes loss of bacterial membrane integrity, and also promotes agglutination of Gram-negative bacteria. Probably contributes to urinary tract sterility. Bactericidal activity is independent of RNase activity. This chain is Ribonuclease K6 (RNASE6), found in Homo sapiens (Human).